The chain runs to 507 residues: MGSKKKCFDGSRDGISGLPDAMICHILSFLPTKVAASTTVLAKRWKPLLAFMPNLDFDESFRFDPRMTCEERRKGSESFMLVVDSVLALQAEANATLNKFYVKCEGVEQNSVLEWIPKVLKRGVLDIDLQIPSSRGFGSNSTFYPLPSEIFVSKTLVRLKIQFQDGANVNVEGDVSLPMLKTLHLDYVKMDTRMLQKLLSGCHTLEELLLMNLIWKESSEPEPCFVSVSVRTLKILKFSRFENFMKAKDFKPIVLLSFDIPNLVYLEYLDTIADKYEQVRFDSLVKASIGLCKTSKQIENDNNNVTKLFMGICNVTILYLTEDTLKVLGCCRETMPVFENLIHLTIRTGVHIGWKSLPHLLKNCPNLQTLVFEGMHHIYRKGRACGDVDEDGTCMCKNLDNMRVKKDIDACLSSSPVKVIKILNFGELCGFCEFCDVEEDVAGQIKQVKQFLETMPDLEKVILYYNTPEDEDVMKVFKKLKKLPRVASAKCEVQIISDNINLSFTFR.

In terms of domain architecture, F-box spans 12–60 (RDGISGLPDAMICHILSFLPTKVAASTTVLAKRWKPLLAFMPNLDFDES). LRR repeat units follow at residues 135 to 163 (RGFGSNSTFYPLPSEIFVSKTLVRLKIQF), 187 to 212 (YVKMDTRMLQKLLSGCHTLEELLLMN), 214 to 240 (IWKESSEPEPCFVSVSVRTLKILKFSR), 317 to 348 (ILYLTEDTLKVLGCCRETMPVFENLIHLTIRT), and 349 to 374 (GVHIGWKSLPHLLKNCPNLQTLVFEG).

The sequence is that of Putative F-box/LRR-repeat protein At4g00320 from Arabidopsis thaliana (Mouse-ear cress).